We begin with the raw amino-acid sequence, 325 residues long: 5-dehydro-2-deoxygluconokinase (325 aa).

The protein belongs to the carbohydrate kinase PfkB family.

The enzyme catalyses 5-dehydro-2-deoxy-D-gluconate + ATP = 6-phospho-5-dehydro-2-deoxy-D-gluconate + ADP + H(+). It participates in polyol metabolism; myo-inositol degradation into acetyl-CoA; acetyl-CoA from myo-inositol: step 5/7. Its function is as follows. Catalyzes the phosphorylation of 5-dehydro-2-deoxy-D-gluconate (2-deoxy-5-keto-D-gluconate or DKG) to 6-phospho-5-dehydro-2-deoxy-D-gluconate (DKGP). This is 5-dehydro-2-deoxygluconokinase from Listeria innocua serovar 6a (strain ATCC BAA-680 / CLIP 11262).